The sequence spans 454 residues: L-serine dehydratase 1 (454 aa).

It belongs to the iron-sulfur dependent L-serine dehydratase family. Requires [4Fe-4S] cluster as cofactor. In terms of processing, activated by post-translational modification by a system involving at least three gene products. Activation is mimicked in vitro by iron and dithiothreitol. There is considerable evidence for a free-radical activation mechanism.

It carries out the reaction L-serine = pyruvate + NH4(+). The protein operates within carbohydrate biosynthesis; gluconeogenesis. Functionally, also deaminates threonine, particularly when it is present in high concentration. This is L-serine dehydratase 1 (sdaA) from Escherichia coli (strain K12).